The following is a 1088-amino-acid chain: MAAVTGLYGSIDEFLNHCSQSGDSAYSALRSLLERLEKPDTRTEARIFLAHLQKKLDNDGASQRCLETYHFQIQDIYLDRNEGTGYQNRKKFTMMVIPSIFMPEDWSFTFYEGINRHPDSIFKDKTVAELGCGNGWISIAIAEKWLPLKVYGLDINPRAVKISWINLYLNAFDEDGQPVYDSESKTLLDRVEFYESDLLSYCRDNHIELERIVGCIPQILNPNPDAMSKLVTENASEEFLHSLSNYCALQGFVEDQFGLGLIARAVEEGIDVIKPMGIMIFNMGGRPGQGVCKRLFERRGLSVNKLWQTKILQASDTDISALVEIEKNNPHRFEFFMGLVGDRPICARTAWAFGKACGRISHALSVYSCQLRHPNEVKKIFEFLKNGFHDISNSLDLSFEDDSVADEKIPFLAYLAGVLKDGSRFPYEPPTGNKRFRDLIASFMKTYHHVPLSTDNVAIFPSRATAIENSLRLFTPRLAIVEEHLTCNLPRQWLTSLEIEQTRDSKTPIDGITVIEAPRQSDLMIELIKKLKPQVVVTGIAQFEAVTSSAFEHLLRVTREIGSRLFIDISDQFELSSLPSSIGVLKYLARTPLPSHAAIICGLLRNRVYTDLEVAFVISEEQTIFDALTRTVELLQGNTALISQYYYGCLFHELLSFQIPDRRQTAEREAENVEASDIDMIGFSSSAISVLSQSELSVRVTEKSSLLHMDVDQIFLPTPTPVKAAIFESFARQNVTETECDVTPILRQFILNTWNFSVEHSAEFIYADFPLALFNKLVLCCIEEGGSLCMPAGSNGNYAAAAKFLNANIMSIPTEAEVGFKLTAKQLSSVLETVHKPWVYISGPTINPTGLLYSNEEMKSLLTVCARYGARTIIDTSFSGIKFNSQDWDGWNLDASLAGLTGNPSFSVCLLGGLFFKIPTGGLSYGFLVLKSGFLADSFRSSFSGLNKPHNTVRYTAKKLLELGEQKGNLTGAAQGQEKLLATRLKRLKETLENCGWEVIEARGGVSVIAKPSAYLGKNIKLEKDGSTWVTKLDGTNIREAMLRATGLCINGPSWTGIPDYCRFTFALEDGDFDRALDCIVKFNQLVK.

This sequence belongs to the class I-like SAM-binding methyltransferase superfamily. Homotetramer.

The protein resides in the cytoplasm. The enzyme catalyses L-methionine + S-adenosyl-L-methionine = S-methyl-L-methionine + S-adenosyl-L-homocysteine. In terms of biological role, catalyzes the S-methylmethionine (SMM) biosynthesis from adenosyl-L-homocysteine (AdoMet) and methionine. SMM biosynthesis (by MMT1) and degradation (by HMT-1, HMT-2 and HMT-3) constitute the SMM cycle in plants, which is probably required to achieve short term control of AdoMet level. Also able to catalyze the selenium-methylmethionine (SeMM) from AdoMet and selenium-methionine (SeMet). May play a role in phoem sulfur transport; such function is however not essential. The protein is Methionine S-methyltransferase (MMT1) of Wollastonia biflora (Beach sunflower).